Consider the following 77-residue polypeptide: MIGDLLIFGTLLMNAGAVLNFKLKKRETQSQGFGDDSGSSSTGENIREFLLSLRYFRIFIALWNIFMMFCMIVLFGS.

An N-terminal signal peptide occupies residues 1 to 17; the sequence is MIGDLLIFGTLLMNAGA. Residues 18–55 lie on the Extracellular side of the membrane; the sequence is VLNFKLKKRETQSQGFGDDSGSSSTGENIREFLLSLRY. The helical transmembrane segment at 56-76 threads the bilayer; sequence FRIFIALWNIFMMFCMIVLFG. Residue Ser77 is a topological domain, cytoplasmic.

Belongs to the SMIM7 family.

Its subcellular location is the membrane. This Danio rerio (Zebrafish) protein is Small integral membrane protein 7 (smim7).